The primary structure comprises 337 residues: Fructose-1,6-bisphosphatase class 1 (337 aa).

Residues Glu90, Asp112, Leu114, and Asp115 each contribute to the Mg(2+) site. Substrate-binding positions include 115–118 (DGSS), Asn211, and Lys277. A Mg(2+)-binding site is contributed by Glu283.

Belongs to the FBPase class 1 family. As to quaternary structure, homotetramer. Mg(2+) is required as a cofactor.

Its subcellular location is the cytoplasm. It catalyses the reaction beta-D-fructose 1,6-bisphosphate + H2O = beta-D-fructose 6-phosphate + phosphate. Its pathway is carbohydrate biosynthesis; gluconeogenesis. The chain is Fructose-1,6-bisphosphatase class 1 from Azotobacter vinelandii (strain DJ / ATCC BAA-1303).